We begin with the raw amino-acid sequence, 267 residues long: MEMO1 family protein MM_1761 (267 aa).

It belongs to the MEMO1 family.

The polypeptide is MEMO1 family protein MM_1761 (Methanosarcina mazei (strain ATCC BAA-159 / DSM 3647 / Goe1 / Go1 / JCM 11833 / OCM 88) (Methanosarcina frisia)).